Here is a 208-residue protein sequence, read N- to C-terminus: Large ribosomal subunit protein uL4 (208 aa).

A disordered region spans residues 45-96 (RQGTHKSKTRAEVRGGGRKPYRQKGTGNARQGSTRSPLMVGGGTIFGPTPHG). The span at 69–80 (GTGNARQGSTRS) shows a compositional bias: polar residues.

This sequence belongs to the universal ribosomal protein uL4 family. Part of the 50S ribosomal subunit.

Functionally, one of the primary rRNA binding proteins, this protein initially binds near the 5'-end of the 23S rRNA. It is important during the early stages of 50S assembly. It makes multiple contacts with different domains of the 23S rRNA in the assembled 50S subunit and ribosome. Its function is as follows. Forms part of the polypeptide exit tunnel. In Chlorobium phaeovibrioides (strain DSM 265 / 1930) (Prosthecochloris vibrioformis (strain DSM 265)), this protein is Large ribosomal subunit protein uL4.